The primary structure comprises 481 residues: UDP-glycosyltransferase 72E3 (481 aa).

Histidine 18 functions as the Proton acceptor in the catalytic mechanism. Histidine 18 contributes to the an anthocyanidin binding site. The active-site Charge relay is aspartate 111. UDP-alpha-D-glucose-binding residues include alanine 346, glutamine 348, histidine 363, tryptophan 366, serine 368, and glutamate 371. Alanine 386 is an an anthocyanidin binding site. Residues glutamate 387 and glutamine 388 each coordinate UDP-alpha-D-glucose.

It belongs to the UDP-glycosyltransferase family. As to expression, expressed in seedlings and roots, and at lower levels in flowers and siliques.

It carries out the reaction (E)-4-coumarate + UDP-alpha-D-glucose = 4-O-(beta-D-glucosyl)-trans-4-coumarate + UDP + H(+). It catalyses the reaction (E)-sinapyl alcohol + UDP-alpha-D-glucose = 4-O-(beta-D-glucosyl)-trans-4-sinapoyl alcohol + UDP + H(+). The catalysed reaction is (E)-coniferol + UDP-alpha-D-glucose = 4-O-(beta-D-glucosyl)-(E)-coniferol + UDP + H(+). The enzyme catalyses (E)-sinapate + UDP-alpha-D-glucose = 4-O-(beta-D-glucosyl)-trans-sinapate + UDP + H(+). It carries out the reaction (E)-coniferaldehyde + UDP-alpha-D-glucose = 4-O-(beta-D-glucosyl)-4-(E)-coniferyl aldehyde + UDP + H(+). It catalyses the reaction (E)-sinapaldehyde + UDP-alpha-D-glucose = 4-O-(beta-D-glucosyl)-4-trans-sinapoyl aldehyde + UDP + H(+). Its function is as follows. Involved in the O-glucosylation of monolignols (alcohol monomers of lignin). Glucosylates coniferyl alcohol to form coniferyl alcohol 4-O-glucoside. Glucosylates sinapyl alcohol to form sinapyl alcohol 4-O-glucoside. Possesses low activity with sinapate as substrate. The polypeptide is UDP-glycosyltransferase 72E3 (Arabidopsis thaliana (Mouse-ear cress)).